The following is a 345-amino-acid chain: UDP-3-O-acylglucosamine N-acyltransferase (345 aa).

His239 serves as the catalytic Proton acceptor.

The protein belongs to the transferase hexapeptide repeat family. LpxD subfamily. Homotrimer.

It catalyses the reaction a UDP-3-O-[(3R)-3-hydroxyacyl]-alpha-D-glucosamine + a (3R)-hydroxyacyl-[ACP] = a UDP-2-N,3-O-bis[(3R)-3-hydroxyacyl]-alpha-D-glucosamine + holo-[ACP] + H(+). The protein operates within bacterial outer membrane biogenesis; LPS lipid A biosynthesis. Its function is as follows. Catalyzes the N-acylation of UDP-3-O-acylglucosamine using 3-hydroxyacyl-ACP as the acyl donor. Is involved in the biosynthesis of lipid A, a phosphorylated glycolipid that anchors the lipopolysaccharide to the outer membrane of the cell. The protein is UDP-3-O-acylglucosamine N-acyltransferase of Geobacter metallireducens (strain ATCC 53774 / DSM 7210 / GS-15).